We begin with the raw amino-acid sequence, 154 residues long: Prefoldin subunit 2 (154 aa).

Gly residues predominate over residues 1–18 (MAENGGRAGKSSGSGTGK). Disordered stretches follow at residues 1-20 (MAEN…GKGA) and 124-154 (IRLM…VLVS). The span at 124–139 (IRLMGEDEKPAAKENS) shows a compositional bias: basic and acidic residues. Residues 140 to 154 (EGAGAKASSAGVLVS) show a composition bias toward low complexity.

Belongs to the prefoldin subunit beta family. As to quaternary structure, heterohexamer of two PFD-alpha type and four PFD-beta type subunits. Component of the PAQosome complex which is responsible for the biogenesis of several protein complexes and which consists of R2TP complex members RUVBL1, RUVBL2, RPAP3 and PIH1D1, URI complex members PFDN2, PFDN6, PDRG1, UXT and URI1 as well as ASDURF, POLR2E and DNAAF10/WDR92. Interacts with URI1; the interaction is phosphorylation-dependent and occurs in a growth-dependent manner.

It is found in the nucleus. Its subcellular location is the cytoplasm. It localises to the mitochondrion. Functionally, binds specifically to cytosolic chaperonin (c-CPN) and transfers target proteins to it. Binds to nascent polypeptide chain and promotes folding in an environment in which there are many competing pathways for nonnative proteins. This chain is Prefoldin subunit 2 (PFDN2), found in Bos taurus (Bovine).